The sequence spans 213 residues: FMN-dependent NADH:quinone oxidoreductase 1 (213 aa).

Residue 18–20 (SVS) participates in FMN binding.

Belongs to the azoreductase type 1 family. Homodimer. FMN serves as cofactor.

The catalysed reaction is 2 a quinone + NADH + H(+) = 2 a 1,4-benzosemiquinone + NAD(+). The enzyme catalyses N,N-dimethyl-1,4-phenylenediamine + anthranilate + 2 NAD(+) = 2-(4-dimethylaminophenyl)diazenylbenzoate + 2 NADH + 2 H(+). Functionally, quinone reductase that provides resistance to thiol-specific stress caused by electrophilic quinones. In terms of biological role, also exhibits azoreductase activity. Catalyzes the reductive cleavage of the azo bond in aromatic azo compounds to the corresponding amines. In Bacillus cereus (strain ZK / E33L), this protein is FMN-dependent NADH:quinone oxidoreductase 1.